We begin with the raw amino-acid sequence, 165 residues long: Fibrinogen-binding protein (165 aa).

The signal sequence occupies residues 1–29; that stretch reads MKNKLIAKSLLTIAAIGITTTTIASTADA.

As to quaternary structure, interacts with host fibrinogen alpha chain/FGA. Interacts with host complement protein C3.

It localises to the secreted. Extracellular fibrinogen-binding protein that plays an important role in virulence. By interacting with the alpha chain of fibrinogen and its derivative fibrin, enhances a non-functional interaction between fibrinogen and platelets and is responsible for repression of fibrinogen-dependent platelet aggregation. In addition, assembles a fibrinogen protective shield around the bacteria which results in impaired phagocytic clearance by the host. Mechanistically, interacts with host complement C3b deposited on the surface of the bacterium via its C-terminal and then recruits fibrinogen via its N-terminal. This chain is Fibrinogen-binding protein (fib), found in Staphylococcus aureus.